The primary structure comprises 520 residues: MTEKRERPGPLRWLRHLLDQLLVRILSLSLFRSRCDPPPLQRFPATELPPAVAAKYVPIPRVKGLPVVGTLVDLIAAGGATHLHKYIDARHKQYGPIFRERLGGTQDAVFVSSANLMRGVFQHEGQYPQHPLPDAWTLYNQQHACQRGLFFMEGAEWLHNRRILNRLLLNGNLNWMDVHIESCTRRMVDQWKRRTAEAAAIPLAESGEIRSYELPLLEQQLYRWSIEVLCCIMFGTSVLTCPKIQSSLDYFTQIVHKVFEHSSRLMTFPPRLAQILRLPIWRDFEANVDEVLREGAAIIDHCIRVQEDQRRPHDEALYHRLQAADVPGDMIKRIFVDLVIAAGDTTAFSSQWALFALSKEPRLQQRLAKERATNDSRLMHGLIKESLRLYPVAPFIGRYLPQDAQLGGHFIEKDTMVLLSLYTAGRDPSHFEQPERVLPERWCIGETEQVHKSHGSLPFAIGQRSCIGRRVALKQLHSLLGRCAAQFEMSCLNEMPVDSVLRMVTVPDRTLRLALRPRTE.

Cysteine 466 contributes to the heme binding site.

This sequence belongs to the cytochrome P450 family. Requires heme as cofactor. In terms of tissue distribution, complex coexpression pattern of dib (disembodied) and sad (shade) in the early embryo that restricts to the prothoracic gland cells of the developing ring gland during late embryogenesis. In larvae and adult, coexpression is seen in prothoracic gland and follicle cells of the ovary. In adults, coexpression is seen in the follicle cells, sad only is expressed in nurse cells.

The protein localises to the mitochondrion membrane. It catalyses the reaction 2-deoxyecdysone + 2 reduced [adrenodoxin] + O2 + 2 H(+) = ecdysone + 2 oxidized [adrenodoxin] + H2O. It carries out the reaction 2,22-dideoxyecdysone + 2 reduced [adrenodoxin] + O2 + 2 H(+) = 22-deoxyecdysone + 2 oxidized [adrenodoxin] + H2O. Its pathway is steroid biosynthesis; ecdysteroid biosynthesis. Required for CNS development: midline glial cells. Involved in the metabolism of insect hormones: responsible for ecdysteroid C2-hydroxylase activity. May be involved in the breakdown of synthetic insecticides. The protein is Cytochrome P450 315a1, mitochondrial of Drosophila melanogaster (Fruit fly).